Consider the following 190-residue polypeptide: Prostaglandin-H2 D-isomerase (190 aa).

Residues 1–22 (MATHHTLWMGLVLLGLLGGLQA) form the signal peptide. A glycan (N-linked (GlcNAc...) asparagine) is linked at Asn-51. Cys-65 (nucleophile) is an active-site residue. Residue Asn-78 is glycosylated (N-linked (GlcNAc...) asparagine). Cys-89 and Cys-186 are disulfide-bonded.

It belongs to the calycin superfamily. Lipocalin family. As to quaternary structure, monomer.

The protein localises to the rough endoplasmic reticulum. It is found in the nucleus membrane. The protein resides in the golgi apparatus. It localises to the cytoplasm. Its subcellular location is the perinuclear region. The protein localises to the secreted. The enzyme catalyses prostaglandin H2 = prostaglandin D2. Catalyzes the conversion of PGH2 to PGD2, a prostaglandin involved in smooth muscle contraction/relaxation and a potent inhibitor of platelet aggregation. Involved in a variety of CNS functions, such as sedation, NREM sleep and PGE2-induced allodynia, and may have an anti-apoptotic role in oligodendrocytes. Binds small non-substrate lipophilic molecules, including biliverdin, bilirubin, retinal, retinoic acid and thyroid hormone, and may act as a scavenger for harmful hydrophobic molecules and as a secretory retinoid and thyroid hormone transporter. Possibly involved in development and maintenance of the blood-brain, blood-retina, blood-aqueous humor and blood-testis barrier. It is likely to play important roles in both maturation and maintenance of the central nervous system and male reproductive system. Involved in PLA2G3-dependent maturation of mast cells. PLA2G3 is secreted by immature mast cells and acts on nearby fibroblasts upstream to PTDGS to synthesize PGD2, which in turn promotes mast cell maturation and degranulation via PTGDR. The chain is Prostaglandin-H2 D-isomerase (PTGDS) from Macaca fuscata fuscata (Japanese macaque).